The primary structure comprises 231 residues: ATP phosphoribosyltransferase (231 aa).

Belongs to the ATP phosphoribosyltransferase family. Short subfamily. In terms of assembly, heteromultimer composed of HisG and HisZ subunits.

It is found in the cytoplasm. It carries out the reaction 1-(5-phospho-beta-D-ribosyl)-ATP + diphosphate = 5-phospho-alpha-D-ribose 1-diphosphate + ATP. Its pathway is amino-acid biosynthesis; L-histidine biosynthesis; L-histidine from 5-phospho-alpha-D-ribose 1-diphosphate: step 1/9. Its function is as follows. Catalyzes the condensation of ATP and 5-phosphoribose 1-diphosphate to form N'-(5'-phosphoribosyl)-ATP (PR-ATP). Has a crucial role in the pathway because the rate of histidine biosynthesis seems to be controlled primarily by regulation of HisG enzymatic activity. The polypeptide is ATP phosphoribosyltransferase (hisG) (Rhizobium etli (strain CIAT 652)).